We begin with the raw amino-acid sequence, 88 residues long: Small ribosomal subunit protein uS15 (88 aa).

Belongs to the universal ribosomal protein uS15 family. In terms of assembly, part of the 30S ribosomal subunit. Forms a bridge to the 50S subunit in the 70S ribosome, contacting the 23S rRNA.

One of the primary rRNA binding proteins, it binds directly to 16S rRNA where it helps nucleate assembly of the platform of the 30S subunit by binding and bridging several RNA helices of the 16S rRNA. Its function is as follows. Forms an intersubunit bridge (bridge B4) with the 23S rRNA of the 50S subunit in the ribosome. This Geobacter metallireducens (strain ATCC 53774 / DSM 7210 / GS-15) protein is Small ribosomal subunit protein uS15.